Here is a 385-residue protein sequence, read N- to C-terminus: Alkanesulfonate monooxygenase (385 aa).

The protein belongs to the SsuD family.

It catalyses the reaction an alkanesulfonate + FMNH2 + O2 = an aldehyde + FMN + sulfite + H2O + 2 H(+). Its function is as follows. Catalyzes the desulfonation of aliphatic sulfonates. The chain is Alkanesulfonate monooxygenase from Burkholderia pseudomallei (strain 1710b).